An 86-amino-acid polypeptide reads, in one-letter code: Cell division topological specificity factor (86 aa).

This sequence belongs to the MinE family.

Its function is as follows. Prevents the cell division inhibition by proteins MinC and MinD at internal division sites while permitting inhibition at polar sites. This ensures cell division at the proper site by restricting the formation of a division septum at the midpoint of the long axis of the cell. This is Cell division topological specificity factor from Shewanella loihica (strain ATCC BAA-1088 / PV-4).